The following is a 353-amino-acid chain: N-acetyl-gamma-glutamyl-phosphate reductase (353 aa).

C155 is a catalytic residue.

The protein belongs to the NAGSA dehydrogenase family. Type 1 subfamily.

It is found in the cytoplasm. The enzyme catalyses N-acetyl-L-glutamate 5-semialdehyde + phosphate + NADP(+) = N-acetyl-L-glutamyl 5-phosphate + NADPH + H(+). It functions in the pathway amino-acid biosynthesis; L-arginine biosynthesis; N(2)-acetyl-L-ornithine from L-glutamate: step 3/4. Functionally, catalyzes the NADPH-dependent reduction of N-acetyl-5-glutamyl phosphate to yield N-acetyl-L-glutamate 5-semialdehyde. The chain is N-acetyl-gamma-glutamyl-phosphate reductase from Microcystis aeruginosa (strain NIES-843 / IAM M-2473).